Here is a 154-residue protein sequence, read N- to C-terminus: 20 kDa calcium-binding protein (154 aa).

4 EF-hand domains span residues 13–48 (DQVK…LNLT), 49–84 (VKPD…KLQE), 86–121 (QDER…LGDD), and 122–154 (LTEE…MTSE). Residues D62, D64, T66, D99, N101, E105, D110, D135, D137, S139, and E146 each contribute to the Ca(2+) site.

The protein localises to the tegument membrane. Its function is as follows. Calcium-binding protein. The sequence is that of 20 kDa calcium-binding protein (SM20) from Schistosoma mansoni (Blood fluke).